Consider the following 943-residue polypeptide: Glutamate receptor ionotropic, NMDA 1 (943 aa).

The signal sequence occupies residues 1-20 (MSTMRLLTLALLFSCSFARA). The Extracellular portion of the chain corresponds to 21–580 (ACDPKIVNIG…TLDSFMQPFQ (560 aa)). N61, N224, N260, N297, N321, N371, N389, N461, N492, and N512 each carry an N-linked (GlcNAc...) asparagine glycan. C79 and C329 are joined by a disulfide. Disulfide bonds link C441-C475 and C457-C476. Residues P537, T539, and R544 each contribute to the glycine site. The chain crosses the membrane as a helical span at residues 581–601 (STLWLLVGLSVHVVAVMLYLL). Residues 602-623 (DRFSPFGRFKVNSEEEEEDALT) lie on the Cytoplasmic side of the membrane. Residues 624–645 (LSSAMWFSWGVLLNSGIGEGAP) constitute an intramembrane region (discontinuously helical). The segment at 624–645 (LSSAMWFSWGVLLNSGIGEGAP) is pore-forming. Over 646–651 (RSFSAR) the chain is Cytoplasmic. The helical transmembrane segment at 652 to 668 (ILGMVWAGFAMIIVASY) threads the bilayer. Residues 669 to 833 (TANLAAFLVL…NAPATLTFEN (165 aa)) lie on the Extracellular side of the membrane. The N-linked (GlcNAc...) asparagine glycan is linked to N695. Glycine is bound by residues S709 and D753. C765 and C819 are disulfide-bonded. The N-linked (GlcNAc...) asparagine glycan is linked to N792. A helical transmembrane segment spans residues 834–854 (MAGVFMLVAGGIVAGIFLIFI). Topologically, residues 855–943 (EIAYKRHKDA…LSDPSVSTVV (89 aa)) are cytoplasmic. 4 positions are modified to phosphoserine: S910, S911, S917, and S918.

It belongs to the glutamate-gated ion channel (TC 1.A.10.1) family. NR1/GRIN1 subfamily. Heterotetramer; the NMDAR subunits are modular and harbor tiered domains that function in concert to regulate opening and closing of the cation-selective ion channel pore. Forms heterotetrameric channels composed of two GluN1/zeta subunits (GRIN1), and two identical GluN2/epsilon subunits (GRIN2A, GRIN2B, GRIN2C or GRIN2D) or GluN3 subunits (GRIN3A or GRIN3B) (in vitro). Can also form heterotetrameric channels that contain at least two GluN1 subunits and at least two different GluN2 subunits (or a combination of one GluN2 and one GluN3 subunits) (in vitro). In vivo, the subunit composition may vary in function of the expression levels of the different subunits. Found in a complex with GRIN2A or GRIN2B, GRIN3A and PPP2CB. Found in a complex with GRIN2A or GRIN2B and GRIN3B. Interacts with SNX27 (via PDZ domain); the interaction is required for recycling to the plasma membrane when endocytosed and prevent degradation in lysosomes. Interacts with DLG4 and MPDZ. Interacts with LRFN1 and LRFN2. Interacts with MYZAP. Found in a complex with DLG4 and PRR7. Found in a complex with GRIN2B and PRR7. Interacts with PRR7; the interaction is reduced following NMDA receptor activity. Post-translationally, NMDA is probably regulated by C-terminal phosphorylation of an isoform of GRIN1 by PKC. Dephosphorylated on Ser-897 probably by protein phosphatase 2A (PPP2CB). Its phosphorylated state is influenced by the formation of the NMDAR-PPP2CB complex and the NMDAR channel activity.

The protein resides in the cell membrane. Its subcellular location is the postsynaptic cell membrane. It is found in the postsynaptic density membrane. It localises to the synaptic cell membrane. It carries out the reaction Ca(2+)(in) = Ca(2+)(out). It catalyses the reaction Na(+)(in) = Na(+)(out). The enzyme catalyses K(+)(in) = K(+)(out). Component of N-methyl-D-aspartate (NMDA) receptors (NMDARs) that function as heterotetrameric, ligand-gated cation channels with high calcium permeability and voltage-dependent block by Mg(2+). NMDARs participate in synaptic plasticity for learning and memory formation by contributing to the long-term potentiation (LTP). Channel activation requires binding of the neurotransmitter L-glutamate to the GluN2 subunit, glycine or D-serine binding to the GluN1 subunit, plus membrane depolarization to eliminate channel inhibition by Mg(2+). NMDARs mediate simultaneously the potasium efflux and the influx of calcium and sodium. Each GluN2 or GluN3 subunit confers differential attributes to channel properties, including activation, deactivation and desensitization kinetics, pH sensitivity, Ca2(+) permeability, and binding to allosteric modulators. The GluN3 subunits confer distinctive ion channel activation mechanism, which relies exclusively on glycine and does not involve glutamate. The polypeptide is Glutamate receptor ionotropic, NMDA 1 (Canis lupus familiaris (Dog)).